Consider the following 1473-residue polypeptide: NACHT, LRR and PYD domains-containing protein 1 (1473 aa).

One can recognise a Pyrin domain in the interval 1–92 (MAGGAWGRLA…CAQAQEGAGH (92 aa)). The segment at 90 to 113 (AGHSPSFPYSPSEPHLGSPSQPTS) is disordered. 3 positions are modified to phosphoserine; by MAPK11 and MAPK14: S93, S99, and S101. S107 carries the post-translational modification Phosphoserine; by MAPK14. The ZAKalpha motif 1 motif lies at 111–117 (PTSTAVL). A Phosphothreonine; by MAPK11, MAPK14 and MAP3K20 modification is found at T112. At S113 the chain carries Phosphoserine; by MAP3K20. Phosphothreonine; by MAP3K20 is present on residues T114 and T129. S132 bears the Phosphoserine; by MAP3K20 mark. A disordered region spans residues 160 to 254 (LPSSPDHESP…HTSLQPHHHP (95 aa)). The residue at position 163 (S163) is a Phosphoserine; by MAPK14. Residue S168 is modified to Phosphoserine; by MAPK11 and MAPk14. S170 carries the phosphoserine; by MAPK11 and MAPK14 modification. Over residues 170-182 (SQESPNAPTSTAV) the composition is skewed to polar residues. A Phosphoserine; by MAPK11 modification is found at S173. A ZAKalpha motif 2 motif is present at residues 177–183 (PTSTAVL). Phosphothreonine; by MAPK11 is present on T178. S179 bears the Phosphoserine; by MAPK11 and MAP3K20 mark. T180 bears the Phosphothreonine; by MAPK11 and MAP3K20 mark. Over residues 218 to 231 (EIREREREKSEKGR) the composition is skewed to basic and acidic residues. Residues 328–637 (RIVILQGAAG…EFFAAMSYVL (310 aa)) enclose the NACHT domain. 334-341 (GAAGIGKS) contacts ATP. LRR repeat units follow at residues 809–830 (NLKE…SLCK), 838–858 (LLET…KDLA), 866–887 (TLTE…HLCQ), 895–915 (KLQR…QDLA), 923–944 (SLKE…LLCE), and 950–973 (ACKL…ELRA). A disordered region spans residues 991-1017 (VMTPTEGLDTGEMSNSTSSLKRQRLGS). The tract at residues 1079 to 1212 (FWGPTGPVAT…HHIVLENPSF (134 aa)) is ZU5. In terms of domain architecture, FIIND spans 1079-1364 (FWGPTGPVAT…LMPATTLIPP (286 aa)). A UPA region spans residues 1213–1364 (SPLGVLLKMI…LMPATTLIPP (152 aa)). A CARD domain is found at 1374 to 1463 (DAPQLLHFVD…HLIMELWEKG (90 aa)).

This sequence belongs to the NLRP family. Interacts (via LRR repeats) with BCL2 and BCL2L1 (via the loop between motifs BH4 and BH3); these interactions reduce NLRP1 inflammasome-induced CASP1 activation and IL1B release, possibly by impairing NLRP1 interaction with PYCARD. Interacts with NOD2; this interaction is enhanced in the presence of muramyl dipeptide (MDP) and increases IL1B release. Interacts with EIF2AK2/PKR; this interaction requires EIF2AK2 activity, is accompanied by EIF2AK2 autophosphorylation and promotes inflammasome assembly in response to danger-associated signals. Interacts with MEFV; this interaction targets NLRP1 to degradation by autophagy, hence preventing excessive IL1B- and IL18-mediated inflammation. Binds (via LRR domain) to dsDNA and dsRNA. Interacts with DPP9; leading to inhibit activation of the inflammasome. DPP9 acts via formation of a ternary complex, composed of a DPP9 homodimer, one full-length NLRP1 protein, and one cleaved C-terminus of NLRP1 (NACHT, LRR and PYD domains-containing protein 1, C-terminus). Interacts with DPP8; leading to inhibit activation of the inflammasome, probably via formation of a ternary complex with DPP8. In terms of assembly, interacts with the C-terminal part of NLRP1 (NACHT, LRR and PYD domains-containing protein 1, C-terminus) in absence of pathogens and other damage-associated signals. As to quaternary structure, interacts with the N-terminal part of NLRP1 (NACHT, LRR and PYD domains-containing protein 1, N-terminus) in absence of pathogens and other damage-associated signals. Homomultimer; forms the NLRP1 inflammasome polymeric complex, a filament composed of homopolymers of this form in response to pathogens and other damage-associated signals. The NLRP1 inflammasome polymeric complex associates with PYCARD/ASC. Interacts (via CARD domain) with PYCARD/ASC (via CARD domain); leading to pro-caspase-1 (proCASP1) recruitment. Pro-caspase-1 (proCASP1) filament formation increases local enzyme concentration, resulting in trans-autocleavage and activation. Active CASP1 then processes IL1B and IL18 precursors, leading to the release of mature cytokines in the extracellular milieu and inflammatory response. (Microbial infection) Interacts with vaccinia virus protein F1. In terms of assembly, (Microbial infection) Interacts with human herpes virus 8/HHV-8 proteins ORF45; relieving autoinhibition of the NLRP1 inflammasome. Autocatalytically cleaved. Autocatalytic cleavage in FIIND region occurs constitutively, prior to activation signals, and is required for inflammasome activity (IL1B release), possibly by facilitating CASP1 binding. Both N- and C-terminal parts remain associated non-covalently. In terms of processing, ubiquitinated by the cullin:ZER1/ZYG11B complex in response to pathogen-associated signals, leading to its degradation by the proteasome and subsequent release of the cleaved C-terminal part of the protein (NACHT, LRR and PYD domains-containing protein 1, C-terminus), which polymerizes and forms the NLRP1 inflammasome. Post-translationally, phosphorylated by MAP3K20 isoform ZAKalpha, MAPK11 and MAPK14 in response to UV-B irradiation and ribosome collisions, promoting activation of the NLRP1 inflammasome and pyroptosis. (Microbial infection) Cleaved between Gln-130 and Gly-131 by the Protease 3C from various human enteroviruses and rhinoviruses (EV68, EV71, Coxsackievirus B3, HRV-14 and HRV-16). This cleavage triggers N-glycine-mediated proteasomal degradation of the autoinhibitory NLRP1 N-terminal fragment via the cullin:ZER1/ZYG11B complex which liberates the activating C-terminal fragment and activates NLRP1 inflammasome. In terms of processing, (Microbial infection) Cleaved between Gln-333 and Gly-334 by the 3C-like proteinase nsp5 from human coronavirus SARS-CoV-2. This cleavage liberates the activating C-terminal fragment and activates NLRP1 inflammasome, leading to downstream activation of GSDME and lung epithelial cell death. As to expression, widely expressed. Abundantly expressed in primary immune cells (isoform 1 and isoform 2), including in neutrophils, monocytes/macrophages, dendritic cells (mostly Langerhans cells), and B- and T-lymphocytes (at protein level). Strongly expressed in epithelial cells lining the glandular epithelium, such as that of the gastrointestinal tract (stomach, small intestine, colon), the respiratory tract (trachea and bronchi), and the endometrial and endocervical glands, gallbladder, prostate, and breast (at protein level). In testis, expressed in spermatogonia and primary spermatocytes, but not in Sertoli cells (at protein level). In the brain, expressed in neurons, in particular in pyramidal ones and in oligodendrocytes, but not detected in microglia (at protein level). Expressed in adult and fetal ocular tissues, including in adult and 24-week old fetal choroid, sclera, cornea, and optic nerve, as well as in adult retina and fetal retina/retinal pigment epithelium. Highly expressed in the skin throughout the epidermis and in dermal fibroblasts, in both glabrous skin and plantar skin. It is detected in keratinocytes, but not in melanocytes. Expressed in epidermal appendages such as hair follicles.

The protein localises to the cytoplasm. It localises to the cytosol. It is found in the nucleus. The protein resides in the inflammasome. The catalysed reaction is ATP + H2O = ADP + phosphate + H(+). With respect to regulation, NLRP1 inflammasome is activated by cleavage by the Protease 3C from various human enteroviruses and rhinoviruses (EV68, EV71, Coxsackievirus B3, HRV-14 and HRV-16): cleavage promotes ubiquitination and degradation of the N-terminal part, releasing the cleaved C-terminal part of the protein (NACHT, LRR and PYD domains-containing protein 1, C-terminus), which polymerizes and forms the NLRP1 inflammasome. Activated double-stranded RNA: positive-strand RNA viruses such as Semliki forest virus and long dsRNA activate the NLRP1 inflammasome. In contrast to its mouse ortholog, not activated by Bacillus anthracis lethal toxin. NLRP1 inflammasome is inhibited by DPP8 and DPP9, which sequester the C-terminal fragment of NLRP1 (NACHT, LRR and PYD domains-containing protein 1, C-terminus) in a ternary complex, thereby preventing NLRP1 oligomerization and activation. NLRP1 inflammasome is activated by Val-boroPro (Talabostat, PT-100), an inhibitor of dipeptidyl peptidases DPP8 and DPP9. Val-boroPro relieves inhibition of DPP8 and/or DPP9 by promoting disruption of the ternary complex, releasing its C-terminal part from autoinhibition. ATPase activity is activated by dsRNA-binding but not dsDNA-binding. (Microbial infection) The NLRP1 inflammasome is activated by human herpes virus 8/HHV-8 protein ORF45, which interacts with the N-terminal part of NLRP1 and promotes its translocation into the nucleus, relieving autoinhibition and leading to activation. Its activity is regulated as follows. (Microbial infection) NLRP1 inflammasome is activated by cleavage by the 3C-like proteinase nsp5 from human coronavirus SARS-CoV-2. In terms of biological role, acts as the sensor component of the NLRP1 inflammasome, which mediates inflammasome activation in response to various pathogen-associated signals, leading to subsequent pyroptosis. Inflammasomes are supramolecular complexes that assemble in the cytosol in response to pathogens and other damage-associated signals and play critical roles in innate immunity and inflammation. Acts as a recognition receptor (PRR): recognizes specific pathogens and other damage-associated signals, such as cleavage by some human enteroviruses and rhinoviruses, double-stranded RNA, UV-B irradiation, or Val-boroPro inhibitor, and mediates the formation of the inflammasome polymeric complex composed of NLRP1, CASP1 and PYCARD/ASC. In response to pathogen-associated signals, the N-terminal part of NLRP1 is degraded by the proteasome, releasing the cleaved C-terminal part of the protein (NACHT, LRR and PYD domains-containing protein 1, C-terminus), which polymerizes and associates with PYCARD/ASC to initiate the formation of the inflammasome complex: the NLRP1 inflammasome recruits pro-caspase-1 (proCASP1) and promotes caspase-1 (CASP1) activation, which subsequently cleaves and activates inflammatory cytokines IL1B and IL18 and gasdermin-D (GSDMD), leading to pyroptosis. In the absence of GSDMD expression, the NLRP1 inflammasome is able to recruit and activate CASP8, leading to activation of gasdermin-E (GSDME). Activation of NLRP1 inflammasome is also required for HMGB1 secretion; the active cytokines and HMGB1 stimulate inflammatory responses. Binds ATP and shows ATPase activity. Plays an important role in antiviral immunity and inflammation in the human airway epithelium. Specifically recognizes a number of pathogen-associated signals: upon infection by human rhinoviruses 14 and 16 (HRV-14 and HRV-16), NLRP1 is cleaved and activated which triggers NLRP1-dependent inflammasome activation and IL18 secretion. Positive-strand RNA viruses, such as Semliki forest virus and long dsRNA activate the NLRP1 inflammasome, triggering IL1B release in a NLRP1-dependent fashion. Acts as a direct sensor for long dsRNA and thus RNA virus infection. May also be activated by muramyl dipeptide (MDP), a fragment of bacterial peptidoglycan, in a NOD2-dependent manner. The NLRP1 inflammasome is also activated in response to UV-B irradiation causing ribosome collisions: ribosome collisions cause phosphorylation and activation of NLRP1 in a MAP3K20-dependent manner, leading to pyroptosis. Its function is as follows. Constitutes the precursor of the NLRP1 inflammasome, which mediates autoproteolytic processing within the FIIND domain to generate the N-terminal and C-terminal parts, which are associated non-covalently in absence of pathogens and other damage-associated signals. Regulatory part that prevents formation of the NLRP1 inflammasome: in absence of pathogens and other damage-associated signals, interacts with the C-terminal part of NLRP1 (NACHT, LRR and PYD domains-containing protein 1, C-terminus), preventing activation of the NLRP1 inflammasome. In response to pathogen-associated signals, this part is ubiquitinated and degraded by the proteasome, releasing the cleaved C-terminal part of the protein, which polymerizes and forms the NLRP1 inflammasome. Functionally, constitutes the active part of the NLRP1 inflammasome. In absence of pathogens and other damage-associated signals, interacts with the N-terminal part of NLRP1 (NACHT, LRR and PYD domains-containing protein 1, N-terminus), preventing activation of the NLRP1 inflammasome. In response to pathogen-associated signals, the N-terminal part of NLRP1 is degraded by the proteasome, releasing this form, which polymerizes and associates with PYCARD/ASC to form of the NLRP1 inflammasome complex: the NLRP1 inflammasome complex then directly recruits pro-caspase-1 (proCASP1) and promotes caspase-1 (CASP1) activation, leading to gasdermin-D (GSDMD) cleavage and subsequent pyroptosis. In terms of biological role, it is unclear whether is involved in inflammasome formation. It is not cleaved within the FIIND domain, does not assemble into specks, nor promote IL1B release. However, in an vitro cell-free system, it has been shown to be activated by MDP. The polypeptide is NACHT, LRR and PYD domains-containing protein 1 (Homo sapiens (Human)).